Here is a 609-residue protein sequence, read N- to C-terminus: Spore coat protein homolog 1 (609 aa).

The first 17 residues, 1-17 (MKSLLFVVFIFLTTTYA), serve as a signal peptide directing secretion. 3 N-linked (GlcNAc...) asparagine glycosylation sites follow: asparagine 82, asparagine 397, and asparagine 440. Positions 527–547 (TVTQVPEAPGTDGTPSESTAW) are disordered. Serine 584 carries the GPI-anchor amidated serine lipid modification. The propeptide at 585–609 (SSSIKRTPCILPLVILASTLFASFF) is removed in mature form.

It is found in the cell membrane. Functionally, may play a role in cell adhesion. The sequence is that of Spore coat protein homolog 1 from Rhizopus delemar (strain RA 99-880 / ATCC MYA-4621 / FGSC 9543 / NRRL 43880) (Mucormycosis agent).